Consider the following 599-residue polypeptide: MALLKPFLSRTFSSFFATITGGRNLIDSIEELITTNYWLIFVMIIVCTCSAPSNGAFFLNDPYGYPFVSLQDDSIESVSATTITTTTIISTIITTTTATQRIFQEKAKTFGQSAEEIQKVKYYLEKIQKFEAKQHPEEIRQQHTTKNSEAIKDDLQIAVEVAKFEKRQKDSITLNPEENGQYYEGDIVLDAQQAHEIYESMIQHGRRTKRKFIRSELRRWDSHKPIIYSFDGSHTIREQRVIELALEHWHNITCLNFERRDDEIQENRIVFTDVDGCASNVGRHPLGEPQFVSLAPECIRLGVIAHEVAHALGFWHEQSRPDRDNYVTVRWENIDRDSKGQFLKELPTDVDNGDVPYDYGSIMHYRSKAFGRYEDLFTLNTNIMDYQKTIGQRDQLSFNDIRLMNVIYCSDSCAQKLPCQRGGYTDPRRCGRCRCPDGFTGKLCERIMPGFGADCGGRIELTSSWKRITSPNYPRDFKEGQECSWLLVAPPGQRVQLRFYGEFEMYCKVRHSLCMDYIEIRNSTDFANTGMRYCCYGTPKSSIMSATEDMLVLFRSFYRGGKGFQAQVRALPTTVFNIRTVRSMDEFNANLNKHAVADS.

The signal sequence occupies residues methionine 1–glycine 22. A propeptide spanning residues arginine 23–lysine 211 is cleaved from the precursor. Residues lysine 211–serine 410 form the Peptidase M12A domain. Asparagine 251 carries N-linked (GlcNAc...) asparagine glycosylation. 5 disulfides stabilise this stretch: cysteine 254–cysteine 409, cysteine 277–cysteine 298, cysteine 413–cysteine 433, cysteine 435–cysteine 444, and cysteine 455–cysteine 483. Residue histidine 306 coordinates Zn(2+). The active site involves glutamate 307. Positions 310 and 316 each coordinate Zn(2+). One can recognise an EGF-like domain in the interval asparagine 405–glutamate 445. The region spanning cysteine 455–leucine 571 is the CUB domain. A glycan (N-linked (GlcNAc...) asparagine) is linked at asparagine 522.

It depends on Zn(2+) as a cofactor.

Its subcellular location is the secreted. Inhibited by marimastat and tripeptide hydroxamic acids. Functionally, metalloprotease which cleaves the carboxyl terminus of procollagens to mature collagens. Probably involved in cuticular collagen maturation. The sequence is that of Zinc metalloproteinase dpy-31 from Brugia malayi (Filarial nematode worm).